The chain runs to 214 residues: uncharacterized protein (214 aa).

Positions 1–17 are cleaved as a signal peptide; sequence MLKKIIILFLGVFVLSG. Residue C18 is the site of N-palmitoyl cysteine attachment. Residue C18 is the site of S-diacylglycerol cysteine attachment. Residues 64-77 show a composition bias toward acidic residues; it reads DNLDDPEDDDDDYD. Disordered regions lie at residues 64–83, 106–138, and 166–197; these read DNLDDPEDDDDDYDNPLRGE, YKAESGESSDDDDMTLSKANKKVRKDNTDKERK, and TANQNYVPPVSNYEPVAPVKNNKPYNNNSKVK. Positions 120–162 form a coiled coil; that stretch reads TLSKANKKVRKDNTDKERKMQEELDQIKAMLRETKRDISKYTC.

It localises to the cell membrane. This is an uncharacterized protein from Rickettsia bellii (strain RML369-C).